The sequence spans 464 residues: Alpha-2A adrenergic receptor (464 aa).

Topologically, residues 1-47 (MFRQEQRWPRQLWPMGSLQPDSGNASWNGTEGPGGGTRATPYSLQVT) are extracellular. Residues 13-34 (WPMGSLQPDSGNASWNGTEGPG) are disordered. Polar residues predominate over residues 19-29 (QPDSGNASWNG). Asn-24 and Asn-28 each carry an N-linked (GlcNAc...) asparagine glycan. Residues 48-73 (VTLVCLVGLLILLTVFGNVLVIIAVF) traverse the membrane as a helical segment. Residues 74–84 (TSRALKAPQNL) are Cytoplasmic-facing. Residues 85 to 110 (FLVSLASADILVATLVIPFSLANEVM) traverse the membrane as a helical segment. At 111-120 (GYWYFGKAWC) the chain is on the extracellular side. A disulfide bridge connects residues Cys-120 and Cys-201. The helical transmembrane segment at 121–143 (EIYLALDVLFCTSSIVHLCAISL) threads the bilayer. Topologically, residues 144–163 (DRYWSITQAIEYNLKRTPRR) are cytoplasmic. Residues 164-187 (IKAIIVTVWVISAVISFPPLISFE) form a helical membrane-spanning segment. Residues 188 to 206 (KAGGGGQQPAEPRCEINDQ) are Extracellular-facing. A helical membrane pass occupies residues 207–231 (KWYVISSSIGSFFAPCLIMILVYVR). Over 232–388 (IYQIAKRRTR…RQNREKRFTF (157 aa)) the chain is Cytoplasmic. Residues 240–378 (TRVPPSRRGP…GGAKASRWRG (139 aa)) are disordered. Residues 251–268 (AHAAAPPGGAERRPNGLG) are compositionally biased toward low complexity. Positions 312-329 (SSEHAERPPGARRPERGL) are enriched in basic and acidic residues. Phosphoserine is present on Ser-345. Over residues 354 to 363 (AGSGTSGSGP) the composition is skewed to gly residues. Arg-367 carries the post-translational modification Omega-N-methylarginine. Residues 389–413 (VLAVVIGVFVVCWFPFFFTYTLTAV) form a helical membrane-spanning segment. Residues 414-423 (GCSVPRTLFK) are Extracellular-facing. The chain crosses the membrane as a helical span at residues 424–444 (FFFWFGYCNSSLNPVIYTIFN). Over 445–464 (HDFRRAFKKILCRGDRKRIV) the chain is Cytoplasmic. The S-palmitoyl cysteine moiety is linked to residue Cys-456.

It belongs to the G-protein coupled receptor 1 family. Adrenergic receptor subfamily. ADRA2A sub-subfamily. Component of the ADA2A-containing complex (ATAC), composed of KAT14, KAT2A, TADA2L, TADA3L, ZZ3, MBIP, WDR5, YEATS2, CCDC101 and DR1.

The protein resides in the cell membrane. In terms of biological role, alpha-2 adrenergic receptors mediate the catecholamine-induced inhibition of adenylate cyclase through the action of G proteins. Component of the ATAC complex, a complex with histone acetyltransferase activity on histones H3 and H4. In Cavia porcellus (Guinea pig), this protein is Alpha-2A adrenergic receptor.